We begin with the raw amino-acid sequence, 396 residues long: Na(+)/H(+) antiporter NhaA 2 (396 aa).

11 helical membrane passes run 17-37 (LSGLILFVVTVLAVTIANSDF), 62-82 (LLHWINDVLMAIFFLVVGLEI), 98-118 (SFPIIAAIGGMIVPAILYISL), 125-145 (GFGVPMATDIAFALGILMLLG), 154-174 (LFLVTLAVVDDLGAIVVVAIF), 179-199 (LHFEYFLYAFAVYSIIWFLNY), 209-229 (IILGVFLWIFIHKTGIHSTIA), 268-288 (FSAFIIMPLFAFANAGVIIDF), 296-316 (LIVLGVALGLIIGKPIGIFSF), 337-357 (IFAVGFLGGIGFTMSIFISHL), and 368-388 (VKLGIFASSVIAAIIGSVLLI).

The protein belongs to the NhaA Na(+)/H(+) (TC 2.A.33) antiporter family.

Its subcellular location is the cell inner membrane. The enzyme catalyses Na(+)(in) + 2 H(+)(out) = Na(+)(out) + 2 H(+)(in). Functionally, na(+)/H(+) antiporter that extrudes sodium in exchange for external protons. The polypeptide is Na(+)/H(+) antiporter NhaA 2 (Aliarcobacter butzleri (strain RM4018) (Arcobacter butzleri)).